Reading from the N-terminus, the 324-residue chain is Biotin synthase 1 (324 aa).

Positions 37-256 (NAIETASLLS…VALARILMPA (220 aa)) constitute a Radical SAM core domain. [4Fe-4S] cluster contacts are provided by Cys52, Cys56, and Cys59. Residues Cys96, Cys127, Cys187, and Arg260 each contribute to the [2Fe-2S] cluster site.

It belongs to the radical SAM superfamily. Biotin synthase family. As to quaternary structure, homodimer. The cofactor is [4Fe-4S] cluster. It depends on [2Fe-2S] cluster as a cofactor.

The catalysed reaction is (4R,5S)-dethiobiotin + (sulfur carrier)-SH + 2 reduced [2Fe-2S]-[ferredoxin] + 2 S-adenosyl-L-methionine = (sulfur carrier)-H + biotin + 2 5'-deoxyadenosine + 2 L-methionine + 2 oxidized [2Fe-2S]-[ferredoxin]. It functions in the pathway cofactor biosynthesis; biotin biosynthesis; biotin from 7,8-diaminononanoate: step 2/2. Catalyzes the conversion of dethiobiotin (DTB) to biotin by the insertion of a sulfur atom into dethiobiotin via a radical-based mechanism. The sequence is that of Biotin synthase 1 from Paracoccus denitrificans (strain Pd 1222).